The following is a 214-amino-acid chain: MSVCALTLILGCFLLFLGDISKPAEGCTCAPSHPQDAFCNSDIVIRAKVVGKKLMKDGPFGTMRYTVKQMKMYRGFNKMPQVQYIYTEASESLCGVKLEVNKYQYLITGRVYEGKVYTGLCNLIERWEKLTFAQRKGLNHRYPLGCTCKIKPCYYLPCFITSKNECLWTDMLSNFGYPGYQSKNYACIKQKEGYCSWYRGWAPPDKTTINTTDP.

The N-terminal stretch at 1–26 (MSVCALTLILGCFLLFLGDISKPAEG) is a signal peptide. A Zn(2+)-binding site is contributed by C27. Involved in metalloproteinase-binding regions lie at residues 27-30 (CTCA) and 91-92 (ES). Disulfide bonds link C27/C94, C29/C121, C39/C146, C148/C195, C153/C158, and C166/C187. The 120-residue stretch at 27 to 146 (CTCAPSHPQD…GLNHRYPLGC (120 aa)) folds into the NTR domain.

Belongs to the protease inhibitor I35 (TIMP) family.

It localises to the secreted. Its subcellular location is the extracellular space. It is found in the extracellular matrix. In terms of biological role, complexes with metalloproteinases (such as collagenases) and irreversibly inactivates them by binding to their catalytic zinc cofactor. May form part of a tissue-specific acute response to remodeling stimuli. This Xenopus laevis (African clawed frog) protein is Metalloproteinase inhibitor 3 (timp3).